The following is a 297-amino-acid chain: Acetyl-coenzyme A carboxylase carboxyl transferase subunit beta (297 aa).

The CoA carboxyltransferase N-terminal domain maps to 27 to 296 (LWHKCPSCEA…PEEAREAAAV (270 aa)). Zn(2+)-binding residues include C31, C34, C50, and C53. The C4-type zinc finger occupies 31-53 (CPSCEAVLYRPELEKTLDVCPKC).

The protein belongs to the AccD/PCCB family. Acetyl-CoA carboxylase is a heterohexamer composed of biotin carboxyl carrier protein (AccB), biotin carboxylase (AccC) and two subunits each of ACCase subunit alpha (AccA) and ACCase subunit beta (AccD). Requires Zn(2+) as cofactor.

The protein resides in the cytoplasm. The catalysed reaction is N(6)-carboxybiotinyl-L-lysyl-[protein] + acetyl-CoA = N(6)-biotinyl-L-lysyl-[protein] + malonyl-CoA. The protein operates within lipid metabolism; malonyl-CoA biosynthesis; malonyl-CoA from acetyl-CoA: step 1/1. Functionally, component of the acetyl coenzyme A carboxylase (ACC) complex. Biotin carboxylase (BC) catalyzes the carboxylation of biotin on its carrier protein (BCCP) and then the CO(2) group is transferred by the transcarboxylase to acetyl-CoA to form malonyl-CoA. This is Acetyl-coenzyme A carboxylase carboxyl transferase subunit beta from Pseudomonas putida (strain ATCC 700007 / DSM 6899 / JCM 31910 / BCRC 17059 / LMG 24140 / F1).